Consider the following 55-residue polypeptide: Trypsin inhibitor ClTI-1 (55 aa).

The Kazal-like domain occupies 1–55 (SIPPACDKYSRLPGCPRDYSPVCGTDGKTYPNECVLCLSNSEENKNVQIYKSGMC). Disulfide bonds link Cys-6-Cys-37, Cys-15-Cys-34, and Cys-23-Cys-55.

Its subcellular location is the secreted. Functionally, inhibits trypsin and plasmin. The chain is Trypsin inhibitor ClTI-1 from Gallus gallus (Chicken).